A 777-amino-acid polypeptide reads, in one-letter code: MAAAGLVAVAAAAEYSGTVASGGNLPGVHCGPSSGAGPGFGPGSWSRSLDRALEEAAVTGVLSLSGRKLREFPRGAANHDLTDTTRADLSRNRLSEIPIEACHFVSLENLNLYQNCIRYIPEAILNLQALTFLNISRNQLSTLPVHLCNLPLKVLIASNNKLVSLPEEIGHLRHLMELDVSCNEIQTIPSQIGNLEALRDLNVRRNHLVHLPEELAELPLIRLDFSCNKITTIPVCYRNLRHLQTITLDNNPLQSPPAQICIKGKVHIFKYLNIQACKIAPDLPDYDRRPLGFGSCHEELYSSRPYGALDSGFNSVDSGDKRWSGNEPTDEFSDLPLRVAEITKEQRLRRESQYQENRGSLVVTNGGVEHDLDQIDYIDSCTAEEEEAEVRQPKGPDPDSLSSQFMAYIEQRRISHEGSPVKPVAIREFQKTEDMRRYLHQNRVPAEPSSLLSLSASHNQLSHTDLELHQRREQLVERTRREAQLAALQYEEEKIRTKQIQRDAVLDFVKQKASQSPQKQHPLLDGVDGECPFPSRRSQHTDDSALCMSLSGLNQVGCAATLPHSSAFTPLKSDDRPNALLSSPATETVHHSPAYSFPAAIQRNQPQRPESFLFRAGVRAETNKGHASPLPPSAAPTTDSTDSITGQNSRQREEELELIDQLRKHIEYRLKVSLPCDLGAALTDGVVLCHLANHVRPRSVPSIHVPSPAVPKLTMAKCRRNVENFLEACRKIGVPQEQLCLPLHILEEKGLSQVAVTVQALLELAPPKQQQHQLSAV.

LRR repeat units follow at residues 56 to 79 (AAVTGVLSLSGRKLREFPRGAANH), 81 to 104 (LTDTTRADLSRNRLSEIPIEACHF), 105 to 127 (VSLENLNLYQNCIRYIPEAILNL), 128 to 150 (QALTFLNISRNQLSTLPVHLCNL), 152 to 172 (LKVLIASNNKLVSLPEEIGHL), 173 to 195 (RHLMELDVSCNEIQTIPSQIGNL), 196 to 218 (EALRDLNVRRNHLVHLPEELAEL), 220 to 239 (LIRLDFSCNKITTIPVCYRN), 240 to 264 (LRHLQTITLDNNPLQSPPAQICIKG), and 266 to 290 (VHIFKYLNIQACKIAPDLPDYDRRP). The tract at residues 56-290 (AAVTGVLSLS…PDLPDYDRRP (235 aa)) is mediates interaction with DOCK7. Serine 324, serine 415, and serine 419 each carry phosphoserine. Positions 382 to 648 (TAEEEEAEVR…DSTDSITGQN (267 aa)) are mediates direct interaction with MYO6. The disordered stretch occupies residues 568–590 (FTPLKSDDRPNALLSSPATETVH). Phosphoserine occurs at positions 611 and 628. A disordered region spans residues 621 to 653 (ETNKGHASPLPPSAAPTTDSTDSITGQNSRQRE). Low complexity predominate over residues 635–645 (APTTDSTDSIT). A Calponin-homology (CH) domain is found at 652 to 765 (REEELELIDQ…VTVQALLELA (114 aa)).

Component of the DOCK7-induced septin displacement/DISP complex, at least composed of DOCK7, LRCH3 and MYO6.

Its subcellular location is the cytoplasm. Its function is as follows. As part of the DISP complex, may regulate the association of septins with actin and thereby regulate the actin cytoskeleton. In Homo sapiens (Human), this protein is DISP complex protein LRCH3.